We begin with the raw amino-acid sequence, 383 residues long: Chaperone protein DnaJ (383 aa).

Residues 5 to 69 enclose the J domain; it reads DYYDILGVSK…QKRAQYDQFG (65 aa). The CR-type zinc-finger motif lies at 138 to 222; sequence GKTTTIKYDR…CHGAGHVHER (85 aa). Zn(2+) contacts are provided by C151, C154, C168, C171, C194, C197, C210, and C213. CXXCXGXG motif repeat units lie at residues 151–158, 168–175, 194–201, and 210–217; these read CKTCHGTG, CPRCHGAG, CPECNGTG, and CDTCHGAG.

It belongs to the DnaJ family. As to quaternary structure, homodimer. The cofactor is Zn(2+).

It localises to the cytoplasm. Its function is as follows. Participates actively in the response to hyperosmotic and heat shock by preventing the aggregation of stress-denatured proteins and by disaggregating proteins, also in an autonomous, DnaK-independent fashion. Unfolded proteins bind initially to DnaJ; upon interaction with the DnaJ-bound protein, DnaK hydrolyzes its bound ATP, resulting in the formation of a stable complex. GrpE releases ADP from DnaK; ATP binding to DnaK triggers the release of the substrate protein, thus completing the reaction cycle. Several rounds of ATP-dependent interactions between DnaJ, DnaK and GrpE are required for fully efficient folding. Also involved, together with DnaK and GrpE, in the DNA replication of plasmids through activation of initiation proteins. The sequence is that of Chaperone protein DnaJ from Limosilactobacillus reuteri (strain DSM 20016) (Lactobacillus reuteri).